A 96-amino-acid chain; its full sequence is UPF0235 protein Pfl01_5322 (96 aa).

It belongs to the UPF0235 family.

In Pseudomonas fluorescens (strain Pf0-1), this protein is UPF0235 protein Pfl01_5322.